Consider the following 119-residue polypeptide: Small ribosomal subunit protein bS6 (119 aa).

Positions 95 to 119 are disordered; the sequence is AVTEPSPLAKGNEKREDRKESEDAE. The span at 105 to 119 shows a compositional bias: basic and acidic residues; the sequence is GNEKREDRKESEDAE.

This sequence belongs to the bacterial ribosomal protein bS6 family.

Binds together with bS18 to 16S ribosomal RNA. In Halorhodospira halophila (strain DSM 244 / SL1) (Ectothiorhodospira halophila (strain DSM 244 / SL1)), this protein is Small ribosomal subunit protein bS6.